A 331-amino-acid polypeptide reads, in one-letter code: Pyruvate dehydrogenase E1 component subunit beta (331 aa).

Glu-60 is a binding site for thiamine diphosphate. Positions 113, 161, 162, 164, and 166 each coordinate K(+).

As to quaternary structure, heterodimer of an alpha and a beta chain. Thiamine diphosphate serves as cofactor.

The protein localises to the plastid. It is found in the chloroplast. It carries out the reaction N(6)-[(R)-lipoyl]-L-lysyl-[protein] + pyruvate + H(+) = N(6)-[(R)-S(8)-acetyldihydrolipoyl]-L-lysyl-[protein] + CO2. The pyruvate dehydrogenase complex catalyzes the overall conversion of pyruvate to acetyl-CoA and CO(2). It contains multiple copies of three enzymatic components: pyruvate dehydrogenase (E1), dihydrolipoamide acetyltransferase (E2) and lipoamide dehydrogenase (E3). This chain is Pyruvate dehydrogenase E1 component subunit beta (pdhB), found in Porphyra purpurea (Red seaweed).